A 287-amino-acid chain; its full sequence is 3-methyl-2-oxobutanoate hydroxymethyltransferase (287 aa).

D57 and D96 together coordinate Mg(2+). 3-methyl-2-oxobutanoate is bound by residues 57-58 (DS), D96, and K125. E127 is a binding site for Mg(2+). The Proton acceptor role is filled by E194.

Belongs to the PanB family. As to quaternary structure, homodecamer; pentamer of dimers. Mg(2+) is required as a cofactor.

The protein resides in the cytoplasm. It catalyses the reaction 3-methyl-2-oxobutanoate + (6R)-5,10-methylene-5,6,7,8-tetrahydrofolate + H2O = 2-dehydropantoate + (6S)-5,6,7,8-tetrahydrofolate. It functions in the pathway cofactor biosynthesis; (R)-pantothenate biosynthesis; (R)-pantoate from 3-methyl-2-oxobutanoate: step 1/2. Functionally, catalyzes the reversible reaction in which hydroxymethyl group from 5,10-methylenetetrahydrofolate is transferred onto alpha-ketoisovalerate to form ketopantoate. In Methylobacterium sp. (strain 4-46), this protein is 3-methyl-2-oxobutanoate hydroxymethyltransferase.